Consider the following 61-residue polypeptide: Metallothionein-2B (61 aa).

Residue Met1 is modified to N-acetylmethionine. The segment at 1 to 29 (MDPNCSCATGDSCTCASSCKCKECKCTSC) is beta. A divalent metal cation contacts are provided by Cys5, Cys7, Cys13, Cys15, Cys19, Cys21, Cys24, Cys26, Cys29, Cys33, Cys34, Cys36, Cys37, Cys41, Cys44, Cys48, Cys50, Cys57, Cys59, and Cys60. The segment at 30–61 (KKSCCSCCPAGCTKCAQGCICKGASDKCSCCA) is alpha.

Belongs to the metallothionein superfamily. Type 1 family. Monomer.

Functionally, metallothioneins have a high content of cysteine residues that bind various heavy metals; these proteins are transcriptionally regulated by both heavy metals and glucocorticoids. The chain is Metallothionein-2B from Oryctolagus cuniculus (Rabbit).